Consider the following 76-residue polypeptide: Small ribosomal subunit protein bS18 (76 aa).

It belongs to the bacterial ribosomal protein bS18 family. Part of the 30S ribosomal subunit. Forms a tight heterodimer with protein bS6.

Binds as a heterodimer with protein bS6 to the central domain of the 16S rRNA, where it helps stabilize the platform of the 30S subunit. The chain is Small ribosomal subunit protein bS18 from Aeromonas salmonicida (strain A449).